An 813-amino-acid chain; its full sequence is Calpain-7 (813 aa).

Residue Met1 is modified to N-acetylmethionine. At Thr95 the chain carries Phosphothreonine. A Calpain catalytic domain is found at 232 to 540 (RERFAYPMPF…YDVVYLSWNP (309 aa)). Active-site residues include Cys290, His458, and Asn478. A domain III region spans residues 541–701 (ALFKESTCIH…INGKWSGQSA (161 aa)). Residues 702 to 813 (GGCGNFQETH…TVPIKTTQLQ (112 aa)) form a domain N region.

The protein belongs to the peptidase C2 family. In terms of tissue distribution, ubiquitous.

It localises to the nucleus. Its function is as follows. Calcium-regulated non-lysosomal thiol-protease. The chain is Calpain-7 (Capn7) from Mus musculus (Mouse).